A 674-amino-acid chain; its full sequence is MVVAHSAATATTTPAATVTATVVMTTATMDLRDWLFLCYGLIAFLTEVIDSTTCPSVCRCDNGFIYCNDRGLTSIPSDIPDDATTLYLQNNQINNAGIPQDLKTKVKVQVIYLYENDLDEFPINLPRSLRELHLQDNNVRTIARDSLARIPLLEKLHLDDNSVSTVSIEEDAFADSKQLKLLFLSRNHLSSIPSGLPHTLEELRLDDNRISTIPLHAFKGLNSLRRLVLDGNLLANQRIADDTFSRLQNLTELSLVRNSLAAPPLNLPSAHLQKLYLQDNAISHIPYNTLAKMRELERLDLSNNNLTTLPRGLFDDLGNLAQLLLRNNPWFCGCNLMWLRDWVRARAAVVNVRGLMCQGPEKVRGMAIKDITSEMDECFEAGSQGGAANAAAKTTVSNHASATTPQGSLFTLKAKRPGLRLPDSNIDYPMATGDGAKTLVIQVKPLTADSIRITWKAMLPASSFRLSWLRLGHSPAVGSITETLVQGDKTEYLLTALEPKSTYIICMVTMETGNTYVADETPVCAKAETADSYGPTTTLNQEQNAGPMAGLPLAGIIGGAVALVFLFLVLGAICWYVHRAGELLTRERVYNRGSRRKDDYMESGTKKDNSILEIRGPGLQMLPINPYRSKEEYVVHTIFPSNGSSLCKGAHTIGYGTTRGYREAGIPDVDYSYT.

An N-terminal signal peptide occupies residues 1-51 (MVVAHSAATATTTPAATVTATVVMTTATMDLRDWLFLCYGLIAFLTEVIDS). The Extracellular segment spans residues 52-552 (TTCPSVCRCD…QNAGPMAGLP (501 aa)). 2 disulfide bridges follow: Cys54-Cys60 and Cys58-Cys67. In terms of domain architecture, LRRNT spans 54–80 (CPSVCRCDNGFIYCNDRGLTSIPSDIP). 10 LRR repeats span residues 81 to 105 (DDAT…LKTK), 106 to 126 (VKVQ…INLP), 127 to 149 (RSLR…SLAR), 151 to 175 (PLLE…AFAD), 176 to 197 (SKQL…SGLP), 198 to 220 (HTLE…AFKG), 222 to 246 (NSLR…TFSR), 247 to 269 (LQNL…NLPS), 270 to 292 (AHLQ…TLAK), and 293 to 316 (MREL…LFDD). N-linked (GlcNAc...) asparagine glycosylation is present at Asn305. The LRRCT domain maps to 328–379 (NPWFCGCNLMWLRDWVRARAAVVNVRGLMCQGPEKVRGMAIKDITSEMDECF). The cysteines at positions 332 and 357 are disulfide-linked. The region spanning 437–532 (KTLVIQVKPL…VCAKAETADS (96 aa)) is the Fibronectin type-III domain. The chain crosses the membrane as a helical span at residues 553 to 573 (LAGIIGGAVALVFLFLVLGAI). The Cytoplasmic portion of the chain corresponds to 574–674 (CWYVHRAGEL…GIPDVDYSYT (101 aa)). Residues Tyr600, Tyr633, and Tyr671 each carry the phosphotyrosine modification.

As to quaternary structure, interacts with FGFR1. Interacts (via extracellular domain) with ADGRL1/LPHN1 and ADGRL3 (via olfactomedin-like domain). In terms of processing, phosphorylated in response to FGFR1 signaling, but is not a direct substrate of FGFR1 or SRC. A mutant where the Tyr phosphorylation sites have been replaced by Phe displays constitutive FGFR1-dependent activation of downstream MAP kinases. Post-translationally, N-glycosylated. Proteolytic cleavage in the juxtamembrane region gives rise to a soluble ectodomain. As to expression, detected in brain (at protein level).

It is found in the cell membrane. The protein resides in the endoplasmic reticulum membrane. It localises to the cytoplasmic vesicle membrane. The protein localises to the cytoplasm. Its subcellular location is the perinuclear region. It is found in the cell junction. The protein resides in the focal adhesion. It localises to the secreted. The protein localises to the cell projection. Its subcellular location is the neuron projection. In terms of biological role, plays a role in fibroblast growth factor-mediated signaling cascades that lead to the activation of MAP kinases. Promotes neurite outgrowth via FGFR1-mediated activation of downstream MAP kinases. Promotes an increase both in neurite number and in neurite length. May play a role in cell-cell adhesion and cell guidance via its interaction with ADGRL1/LPHN1 and ADGRL3. In Mus musculus (Mouse), this protein is Leucine-rich repeat transmembrane protein FLRT1.